A 277-amino-acid chain; its full sequence is Pantothenate synthetase (277 aa).

Residue 26–33 (MGNLHEGH) participates in ATP binding. His-33 (proton donor) is an active-site residue. Gln-57 provides a ligand contact to (R)-pantoate. Position 57 (Gln-57) interacts with beta-alanine. 144 to 147 (GKKD) serves as a coordination point for ATP. Gln-150 is a (R)-pantoate binding site. Residues Val-173 and 181-184 (LSSR) each bind ATP.

The protein belongs to the pantothenate synthetase family. Homodimer.

Its subcellular location is the cytoplasm. The catalysed reaction is (R)-pantoate + beta-alanine + ATP = (R)-pantothenate + AMP + diphosphate + H(+). It participates in cofactor biosynthesis; (R)-pantothenate biosynthesis; (R)-pantothenate from (R)-pantoate and beta-alanine: step 1/1. Its function is as follows. Catalyzes the condensation of pantoate with beta-alanine in an ATP-dependent reaction via a pantoyl-adenylate intermediate. The protein is Pantothenate synthetase of Paraburkholderia phymatum (strain DSM 17167 / CIP 108236 / LMG 21445 / STM815) (Burkholderia phymatum).